The sequence spans 178 residues: Deoxyuridine 5'-triphosphate nucleotidohydrolase (178 aa).

The protein belongs to the dUTPase family. Requires Mg(2+) as cofactor.

The catalysed reaction is dUTP + H2O = dUMP + diphosphate + H(+). The protein operates within pyrimidine metabolism; dUMP biosynthesis; dUMP from dCTP (dUTP route): step 2/2. This enzyme is involved in nucleotide metabolism: it produces dUMP, the immediate precursor of thymidine nucleotides and it decreases the intracellular concentration of dUTP so that uracil cannot be incorporated into DNA. In Fowl adenovirus A serotype 1 (strain CELO / Phelps) (FAdV-1), this protein is Deoxyuridine 5'-triphosphate nucleotidohydrolase.